The primary structure comprises 288 residues: 33 kDa chaperonin (288 aa).

Intrachain disulfides connect C235–C237 and C268–C271.

The protein belongs to the HSP33 family. Post-translationally, under oxidizing conditions two disulfide bonds are formed involving the reactive cysteines. Under reducing conditions zinc is bound to the reactive cysteines and the protein is inactive.

Its subcellular location is the cytoplasm. Redox regulated molecular chaperone. Protects both thermally unfolding and oxidatively damaged proteins from irreversible aggregation. Plays an important role in the bacterial defense system toward oxidative stress. This chain is 33 kDa chaperonin, found in Streptococcus thermophilus (strain ATCC BAA-250 / LMG 18311).